A 118-amino-acid chain; its full sequence is Holin-like protein CidA 2 (118 aa).

Helical transmembrane passes span 4–26 (VTLL…IQGV), 33–52 (GSLI…VLPL), 62–84 (LIVF…GSFL), and 91–113 (IFLL…SQLL).

The protein belongs to the CidA/LrgA family. CidA subfamily.

It localises to the cell membrane. Its function is as follows. Increases the activity of extracellular murein hydrolases possibly by mediating their export via hole formation. Inhibited by the antiholin-like proteins LrgAB. In an unstressed cell, the LrgAB products probably inhibit the function of the CidA protein. When a cell is stressed by the addition of antibiotics or by other factors in the environment, CidA possibly oligomerizes within the bacterial cell membrane, creating lesions that disrupt the proton motive force, which in turn results in loss of cell viability. These lesions are also hypothesized to regulate the subsequent cell lysis by either allowing the murein hydrolases access to the cell wall substrate and/or regulating their activity by a possible change in the cell wall pH that results from loss of membrane potential. This Bacillus cereus (strain ATCC 14579 / DSM 31 / CCUG 7414 / JCM 2152 / NBRC 15305 / NCIMB 9373 / NCTC 2599 / NRRL B-3711) protein is Holin-like protein CidA 2 (cidA2).